A 228-amino-acid polypeptide reads, in one-letter code: Octanoyltransferase (228 aa).

A BPL/LPL catalytic domain is found at K30–L214. Residues R75–H82, A144–G146, and G157–A159 contribute to the substrate site. Catalysis depends on C175, which acts as the Acyl-thioester intermediate.

The protein belongs to the LipB family.

The protein localises to the cytoplasm. It catalyses the reaction octanoyl-[ACP] + L-lysyl-[protein] = N(6)-octanoyl-L-lysyl-[protein] + holo-[ACP] + H(+). Its pathway is protein modification; protein lipoylation via endogenous pathway; protein N(6)-(lipoyl)lysine from octanoyl-[acyl-carrier-protein]: step 1/2. Functionally, catalyzes the transfer of endogenously produced octanoic acid from octanoyl-acyl-carrier-protein onto the lipoyl domains of lipoate-dependent enzymes. Lipoyl-ACP can also act as a substrate although octanoyl-ACP is likely to be the physiological substrate. In Caldicellulosiruptor bescii (strain ATCC BAA-1888 / DSM 6725 / KCTC 15123 / Z-1320) (Anaerocellum thermophilum), this protein is Octanoyltransferase.